The sequence spans 615 residues: uncharacterized protein (615 aa).

D403 acts as the Proton acceptor in catalysis. E406 functions as the Proton donor in the catalytic mechanism.

Belongs to the glycosyl hydrolase 15 family.

This is an uncharacterized protein from Methanocaldococcus jannaschii (strain ATCC 43067 / DSM 2661 / JAL-1 / JCM 10045 / NBRC 100440) (Methanococcus jannaschii).